We begin with the raw amino-acid sequence, 118 residues long: NAD(P)H-quinone oxidoreductase subunit M (118 aa).

The protein belongs to the complex I NdhM subunit family. In terms of assembly, NDH-1 can be composed of about 15 different subunits; different subcomplexes with different compositions have been identified which probably have different functions.

The protein localises to the cellular thylakoid membrane. It catalyses the reaction a plastoquinone + NADH + (n+1) H(+)(in) = a plastoquinol + NAD(+) + n H(+)(out). It carries out the reaction a plastoquinone + NADPH + (n+1) H(+)(in) = a plastoquinol + NADP(+) + n H(+)(out). Functionally, NDH-1 shuttles electrons from an unknown electron donor, via FMN and iron-sulfur (Fe-S) centers, to quinones in the respiratory and/or the photosynthetic chain. The immediate electron acceptor for the enzyme in this species is believed to be plastoquinone. Couples the redox reaction to proton translocation, and thus conserves the redox energy in a proton gradient. Cyanobacterial NDH-1 also plays a role in inorganic carbon-concentration. This chain is NAD(P)H-quinone oxidoreductase subunit M, found in Rippkaea orientalis (strain PCC 8801 / RF-1) (Cyanothece sp. (strain PCC 8801)).